A 348-amino-acid chain; its full sequence is MLKSRLRMFLNELKLLVLTGGGRPRAEPQPRGGGGGGCGWAPFAGCSARDGDGDEEEYYGSEPRARGLAGDKEPRAGPPPPPAPPPPPPGALDALSLSSSLDSGLRTPQCRICFQGPEQGELLSPCRCDGSVRCTHQPCLIRWISERGSWSCELCYFKYQVLAISTKNPLQWQAISLTVIEKVQIAAIVLGSLFLVASISWLIWSSLSPSAKWQRQDLLFQICYGMYGFMDVVCIGLIVHEGSSVYRIFKRWQAVNQQWKVLNYDKTKDVGGDTGGGAAGKPGPRTSRTSPPAGAPTRPPAAQRMRMRTLLPQRCGYTILHLLGQLRPPDARSSSHSGREVVMRVTTV.

Residues 48 to 96 (ARDGDGDEEEYYGSEPRARGLAGDKEPRAGPPPPPAPPPPPPGALDALS) form a disordered region. The segment covering 63–75 (PRARGLAGDKEPR) has biased composition (basic and acidic residues). Positions 76–90 (AGPPPPPAPPPPPPG) are enriched in pro residues. An RING-CH-type zinc finger spans residues 102-162 (DSGLRTPQCR…ELCYFKYQVL (61 aa)). Zn(2+) contacts are provided by Cys-110, Cys-113, Cys-126, Cys-128, His-136, Cys-139, Cys-152, and Cys-155. The next 2 membrane-spanning stretches (helical) occupy residues 185 to 205 (IAAI…LIWS) and 219 to 239 (LFQI…GLIV). Disordered stretches follow at residues 272 to 304 (GDTG…AAQR) and 328 to 348 (PPDA…VTTV).

As to quaternary structure, homodimer.

It localises to the golgi apparatus membrane. The protein localises to the lysosome membrane. The catalysed reaction is S-ubiquitinyl-[E2 ubiquitin-conjugating enzyme]-L-cysteine + [acceptor protein]-L-lysine = [E2 ubiquitin-conjugating enzyme]-L-cysteine + N(6)-ubiquitinyl-[acceptor protein]-L-lysine.. It functions in the pathway protein modification; protein ubiquitination. In terms of biological role, E3 ubiquitin-protein ligase that may mediate ubiquitination of MHC-I, CD4 and ICAM1, and promote their subsequent endocytosis and sorting to lysosomes via multivesicular bodies. E3 ubiquitin ligases accept ubiquitin from an E2 ubiquitin-conjugating enzyme in the form of a thioester and then directly transfer the ubiquitin to targeted substrates. The sequence is that of E3 ubiquitin-protein ligase MARCHF9 (Marchf9) from Mus musculus (Mouse).